A 508-amino-acid chain; its full sequence is MAP kinase kinase MKK1/SSP32 (508 aa).

Disordered stretches follow at residues 1–21 (MASLFRPPESAKCNPNSPRLK), 35–95 (IYLT…LSIN), and 130–158 (ELSGNSDLTPSSMASPFSHTNTSSPYLRN). A compositionally biased stretch (polar residues) spans 35 to 47 (IYLTSNGSSTTAY). Low complexity predominate over residues 48–66 (SSHTPEPLTSSTSTLFSQT). 2 stretches are compositionally biased toward polar residues: residues 67–79 (RLHPSDSSMTLNT) and 131–158 (LSGNSDLTPSSMASPFSHTNTSSPYLRN). The residue at position 192 (S192) is a Phosphoserine. In terms of domain architecture, Protein kinase spans 221–488 (IETLGILGEG…PRQMINHPWI (268 aa)). ATP-binding positions include 227–235 (LGEGAGGSV) and K250. Residue D349 is the Proton acceptor of the active site.

This sequence belongs to the protein kinase superfamily. STE Ser/Thr protein kinase family. MAP kinase kinase subfamily.

The catalysed reaction is L-seryl-[protein] + ATP = O-phospho-L-seryl-[protein] + ADP + H(+). It catalyses the reaction L-threonyl-[protein] + ATP = O-phospho-L-threonyl-[protein] + ADP + H(+). It carries out the reaction L-tyrosyl-[protein] + ATP = O-phospho-L-tyrosyl-[protein] + ADP + H(+). Involved in a signal transduction pathway that play a role in yeast cell morphogenesis and cell growth. This pathway seems to start by SMP3; then involve the kinase PKC1 that may act on the BCK1 kinase that then phosphorylates MKK1 and MKK2 which themselves phosphorylate the MPK1 kinase. This is MAP kinase kinase MKK1/SSP32 (MKK1) from Saccharomyces cerevisiae (strain ATCC 204508 / S288c) (Baker's yeast).